The chain runs to 356 residues: Outer spore wall protein LDS2 (356 aa).

At 1-92 the chain is on the cytoplasmic side; it reads MSTRPQPDWY…ISESVGNSDY (92 aa). The helical transmembrane segment at 93–113 threads the bilayer; it reads LHLFFLIFGYYLLNLLLIVAF. Topologically, residues 114 to 115 are extracellular; sequence TS. Residues 116–136 form a helical membrane-spanning segment; the sequence is ILAWSLLVCIYLPFLGLFALP. Over 137–213 the chain is Cytoplasmic; the sequence is LAYMQTILIS…KRFYLVSLPQ (77 aa). Residues 214-234 form a helical membrane-spanning segment; the sequence is FFIFFFWYIFIAFMFLLLLLV. Residues 235 to 294 lie on the Extracellular side of the membrane; the sequence is PIVGPITINMLPFSPGMGFYYFEPYFVDVLHLDSRKLSKVYYKGFAKWLLYSISSGLLES. Residues 295–315 traverse the membrane as a helical segment; that stretch reads IPILGGLFIGTNAVGASLWIV. At 316-356 the chain is on the cytoplasmic side; sequence KEIKDRDQPAVPPSPPAEPEEPTVGSYAPPIQQSIAHINPP. The segment at 322–356 is disordered; sequence DQPAVPPSPPAEPEEPTVGSYAPPIQQSIAHINPP. The span at 346–356 shows a compositional bias: polar residues; sequence IQQSIAHINPP.

Belongs to the LDS family.

Its subcellular location is the prospore membrane. The protein localises to the lipid droplet. It localises to the spore wall. Its function is as follows. Involved in spore wall assembly. This Saccharomyces cerevisiae (strain ATCC 204508 / S288c) (Baker's yeast) protein is Outer spore wall protein LDS2.